Reading from the N-terminus, the 1102-residue chain is Trafficking protein particle complex II-specific subunit 130 (1102 aa).

The protein belongs to the TMEM1 family. In terms of assembly, part of the multisubunit TRAPP (transport protein particle) II complex composed of BET3, BET5, TRS20, TRS23, TRS31, TRS33, TRS65, TRS120 and TRS130. Interacts with YPT31 and YPT32.

The protein resides in the golgi apparatus. In terms of biological role, specific subunit of the TRAPP II complex, a highly conserved vesicle tethering complex that functions in the late Golgi as a guanine nucleotide exchange factor (GEF) for the Golgi YPT1 GTPase. TRS130 plays a role in the YPT GEF activity of TRAPP II in concert with the two other TRAPP II-specific subunits TRS65 and TRS120. Required for both the cytoplasm-to-vacuole targeting (Cvt) pathway and starvation-induced autophagy through its role in ATG8 and ATG9 trafficking. In Saccharomyces cerevisiae (strain ATCC 204508 / S288c) (Baker's yeast), this protein is Trafficking protein particle complex II-specific subunit 130 (TRS130).